Here is a 497-residue protein sequence, read N- to C-terminus: Maintenance of mitochondrial morphology protein 1 (497 aa).

The Lumenal segment spans residues 1-28 (MSSVLNPSSPHSWDLCCSSSSNRSYHRP). A helical transmembrane segment spans residues 29 to 55 (THPIVGLLVGQLSVVLLIGAFIKFFIF). At 56–497 (GEAPPSPSRS…GSLPDAVPIT (442 aa)) the chain is on the cytoplasmic side. Disordered regions lie at residues 60–107 (PSPS…SSST), 284–330 (ESST…STTG), 402–421 (TGVR…AAGV), and 437–497 (EMLH…VPIT). Residues 66–77 (QTHRTSQHKRSY) are compositionally biased toward basic residues. The span at 81–94 (GARDLSPRTLKEKP) shows a compositional bias: basic and acidic residues. 3 stretches are compositionally biased toward polar residues: residues 95–107 (SSNV…SSST), 284–302 (ESST…NLRS), and 311–330 (PQES…STTG). One can recognise an SMP-LTD domain in the interval 140 to 393 (QPESLDWFNV…EPRVQVVALP (254 aa)). Positions 412–421 (DVSSSDAAGV) are enriched in low complexity. A compositionally biased stretch (basic and acidic residues) spans 440–451 (HAAREVDAEGLR). The segment covering 462–473 (GSSSKYAQQNQS) has biased composition (polar residues). Basic and acidic residues predominate over residues 474–484 (SRERGRADDPF).

Belongs to the MMM1 family. Homodimer. Component of the ER-mitochondria encounter structure (ERMES) or MDM complex, composed of MMM1, MDM10, MDM12 and MDM34. An MMM1 homodimer associates with one molecule of MDM12 on each side in a pairwise head-to-tail manner, and the SMP-LTD domains of MMM1 and MDM12 generate a continuous hydrophobic tunnel for phospholipid trafficking.

Its subcellular location is the endoplasmic reticulum membrane. Its function is as follows. Component of the ERMES/MDM complex, which serves as a molecular tether to connect the endoplasmic reticulum (ER) and mitochondria. Components of this complex are involved in the control of mitochondrial shape and protein biogenesis, and function in nonvesicular lipid trafficking between the ER and mitochondria. The MDM12-MMM1 subcomplex functions in the major beta-barrel assembly pathway that is responsible for biogenesis of all outer membrane beta-barrel proteins, and acts in a late step after the SAM complex. The MDM10-MDM12-MMM1 subcomplex further acts in the TOM40-specific pathway after the action of the MDM12-MMM1 complex. Essential for establishing and maintaining the structure of mitochondria and maintenance of mtDNA nucleoids. This chain is Maintenance of mitochondrial morphology protein 1, found in Uncinocarpus reesii (strain UAMH 1704).